A 417-amino-acid chain; its full sequence is Ribonucleoside-diphosphate reductase small chain (417 aa).

Fe cation-binding residues include Asp-168, Glu-199, and His-202. Tyr-206 is a catalytic residue. Residues Glu-261, Glu-297, and His-300 each coordinate Fe cation.

Belongs to the ribonucleoside diphosphate reductase small chain family. In terms of assembly, heterotetramer composed of a homodimer of the large subunit (R1) and a homodimer of the small subunit (R2). Larger multisubunit protein complex are also active, composed of (R1)n(R2)n. Fe cation serves as cofactor.

The catalysed reaction is a 2'-deoxyribonucleoside 5'-diphosphate + [thioredoxin]-disulfide + H2O = a ribonucleoside 5'-diphosphate + [thioredoxin]-dithiol. Its function is as follows. Ribonucleoside-diphosphate reductase holoenzyme provides the precursors necessary for viral DNA synthesis. Allows virus growth in non-dividing cells. Catalyzes the biosynthesis of deoxyribonucleotides from the corresponding ribonucleotides. The protein is Ribonucleoside-diphosphate reductase small chain (RNR2) of Acanthamoeba polyphaga mimivirus (APMV).